The primary structure comprises 662 residues: Calcium-dependent protease (662 aa).

The 334-residue stretch at 196-529 (QWHLKQTTIG…YGRINALKAV (334 aa)) folds into the Peptidase S8 domain. Active-site charge relay system residues include Asp233, His270, and Ser466. In terms of domain architecture, P/Homo B spans 535 to 662 (AQPEPVSIFT…IRSLTIELGF (128 aa)).

This sequence belongs to the peptidase S8 family.

The protein localises to the cytoplasm. Functionally, degrades phycobiliproteins in vitro. Has a substrate specificity similar to that of trypsin. This Trichormus variabilis (strain ATCC 29413 / PCC 7937) (Anabaena variabilis) protein is Calcium-dependent protease (prcA).